Here is a 145-residue protein sequence, read N- to C-terminus: uncharacterized protein (145 aa).

The disordered stretch occupies residues 62 to 145 (LPSVGGRMTA…QLPQQGGCPG (84 aa)). Over residues 84–95 (ASSPEDPPLPHP) the composition is skewed to pro residues.

This is an uncharacterized protein from Homo sapiens (Human).